Consider the following 365-residue polypeptide: tRNA dimethylallyltransferase (365 aa).

23–30 provides a ligand contact to ATP; it reads APTASGKT. Position 25-30 (25-30) interacts with substrate; the sequence is TASGKT. 3 interaction with substrate tRNA regions span residues 48–51, 172–176, and 256–261; these read DSAL, QRITR, and RCVGYR.

Belongs to the IPP transferase family. In terms of assembly, monomer. Mg(2+) serves as cofactor.

The catalysed reaction is adenosine(37) in tRNA + dimethylallyl diphosphate = N(6)-dimethylallyladenosine(37) in tRNA + diphosphate. In terms of biological role, catalyzes the transfer of a dimethylallyl group onto the adenine at position 37 in tRNAs that read codons beginning with uridine, leading to the formation of N6-(dimethylallyl)adenosine (i(6)A). This is tRNA dimethylallyltransferase from Psychrobacter sp. (strain PRwf-1).